The sequence spans 231 residues: 7-cyano-7-deazaguanine synthase (231 aa).

ATP is bound at residue 8–18; it reads FSGGQDSTTCL. Zn(2+) contacts are provided by Cys188, Cys197, Cys200, and Cys203.

This sequence belongs to the QueC family. Requires Zn(2+) as cofactor.

It catalyses the reaction 7-carboxy-7-deazaguanine + NH4(+) + ATP = 7-cyano-7-deazaguanine + ADP + phosphate + H2O + H(+). It functions in the pathway purine metabolism; 7-cyano-7-deazaguanine biosynthesis. Catalyzes the ATP-dependent conversion of 7-carboxy-7-deazaguanine (CDG) to 7-cyano-7-deazaguanine (preQ(0)). The sequence is that of 7-cyano-7-deazaguanine synthase from Escherichia coli O1:K1 / APEC.